We begin with the raw amino-acid sequence, 231 residues long: tRNA (guanine-N(7)-)-methyltransferase (231 aa).

S-adenosyl-L-methionine contacts are provided by Glu-62, Glu-87, Asp-114, and Asp-136. The active site involves Asp-136. Residues Lys-140, Asp-172, and 210–213 (TRYE) contribute to the substrate site.

Belongs to the class I-like SAM-binding methyltransferase superfamily. TrmB family.

It carries out the reaction guanosine(46) in tRNA + S-adenosyl-L-methionine = N(7)-methylguanosine(46) in tRNA + S-adenosyl-L-homocysteine. It functions in the pathway tRNA modification; N(7)-methylguanine-tRNA biosynthesis. Its function is as follows. Catalyzes the formation of N(7)-methylguanine at position 46 (m7G46) in tRNA. This chain is tRNA (guanine-N(7)-)-methyltransferase, found in Zymomonas mobilis subsp. mobilis (strain ATCC 31821 / ZM4 / CP4).